We begin with the raw amino-acid sequence, 219 residues long: Proteasome subunit beta type-9 (219 aa).

A propeptide spans methionine 1–glycine 20 (removed in mature form). Catalysis depends on threonine 21, which acts as the Nucleophile. N6-acetyllysine is present on residues lysine 53 and lysine 109.

This sequence belongs to the peptidase T1B family. In terms of assembly, the 26S proteasome consists of a 20S proteasome core and two 19S regulatory subunits. The 20S proteasome core is composed of 28 subunits that are arranged in four stacked rings, resulting in a barrel-shaped structure. The two end rings are each formed by seven alpha subunits, and the two central rings are each formed by seven beta subunits. The catalytic chamber with the active sites is on the inside of the barrel. Component of the immunoproteasome, where it displaces the equivalent housekeeping subunit PSMB6. Component of the spermatoproteasome, a form of the proteasome specifically found in testis. In terms of processing, autocleaved. The resulting N-terminal Thr residue of the mature subunit is responsible for the nucleophile proteolytic activity.

Its subcellular location is the cytoplasm. It localises to the nucleus. The enzyme catalyses Cleavage of peptide bonds with very broad specificity.. Functionally, the proteasome is a multicatalytic proteinase complex which is characterized by its ability to cleave peptides with Arg, Phe, Tyr, Leu, and Glu adjacent to the leaving group at neutral or slightly basic pH. The proteasome has an ATP-dependent proteolytic activity. This subunit is involved in antigen processing to generate class I binding peptides. This chain is Proteasome subunit beta type-9 (Psmb9), found in Mus terricolor (Earth-colored mouse).